Consider the following 231-residue polypeptide: Ion-translocating oxidoreductase complex subunit E (231 aa).

Helical transmembrane passes span 18-38 (ALVQLLGLCPLLAVTSTATNA), 39-59 (LGLGLATTLVLTLTNLTISTL), 63-83 (TPAEIRIPIYVMIIASVVSAV), 86-106 (LINAYAFGLYQSLGIFIPLIV), 125-145 (ALSALDGFSIGMGATCAMFVL), and 182-202 (PFLLAMLPPGAFIGLGLMLAG).

The protein belongs to the NqrDE/RnfAE family. In terms of assembly, the complex is composed of six subunits: RsxA, RsxB, RsxC, RsxD, RsxE and RsxG.

The protein resides in the cell inner membrane. Its function is as follows. Part of a membrane-bound complex that couples electron transfer with translocation of ions across the membrane. Required to maintain the reduced state of SoxR. In Escherichia coli O127:H6 (strain E2348/69 / EPEC), this protein is Ion-translocating oxidoreductase complex subunit E.